We begin with the raw amino-acid sequence, 118 residues long: Non-specific lipid-transfer protein 2 (118 aa).

A signal peptide spans 1 to 25 (MAGVMKLACMVLACMIVAGPITANA). Cystine bridges form between cysteine 29/cysteine 76, cysteine 39/cysteine 53, cysteine 54/cysteine 100, and cysteine 74/cysteine 114.

This sequence belongs to the plant LTP family.

In terms of biological role, plant non-specific lipid-transfer proteins transfer phospholipids as well as galactolipids across membranes. May play a role in wax or cutin deposition in the cell walls of expanding epidermal cells and certain secretory tissues. The chain is Non-specific lipid-transfer protein 2 (LTP2) from Arabidopsis thaliana (Mouse-ear cress).